A 221-amino-acid chain; its full sequence is Probable hydrogenase maturation factor HypB (221 aa).

Residues 35-196 (AFDFMGAIGS…KRINPDAEVV (162 aa)) are G-domain. Ni(2+)-binding residues include C95 and H96. Zn(2+) contacts are provided by C95, H96, H100, H104, and C127. C127 lines the Ni(2+) pocket.

Belongs to the SIMIBI class G3E GTPase family. HypB/HupM subfamily. Homodimer.

Involved in the maturation of [NiFe] hydrogenases. Required for nickel insertion into the metal center of the hydrogenase. Exhibits a low intrinsic GTPase activity, which is essential for nickel insertion. The chain is Probable hydrogenase maturation factor HypB from Methanocaldococcus jannaschii (strain ATCC 43067 / DSM 2661 / JAL-1 / JCM 10045 / NBRC 100440) (Methanococcus jannaschii).